We begin with the raw amino-acid sequence, 1363 residues long: Collagen alpha-2(I) chain (1363 aa).

Residues 1–22 (MLSFVDTRILLLLAVTSYLATS) form the signal peptide. Q23 is modified (pyrrolidone carboxylic acid). Residues 23-77 (QHLFQASAGRKGPRGDKGPQGERGPPGPPGRDGEDGPPGPPGPPGPPGLGGNFAA) constitute a propeptide, N-terminal propeptide. The interval 28-1110 (ASAGRKGPRG…GPNGGGYEVG (1083 aa)) is disordered. A compositionally biased stretch (pro residues) spans 59–69 (PPGPPGPPGPP). Q78 is modified (pyrrolidone carboxylic acid). K83 carries the post-translational modification Allysine. A compositionally biased stretch (low complexity) spans 88 to 97 (GPGPMGLMGP). Positions 98–110 (RGPPGASGPPGPP) are enriched in pro residues. Over residues 112 to 128 (FQGVPGEPGEPGQTGPQ) the composition is skewed to low complexity. Basic and acidic residues predominate over residues 140–154 (AGEDGHPGKPGRPGE). At K176 the chain carries 5-hydroxylysine; alternate. Residue K176 is glycosylated (O-linked (Gal...) hydroxylysine; alternate). 2 stretches are compositionally biased toward low complexity: residues 224-263 (IGAPGPAGARGSDGSAGPTGPAGPIGAAGPPGFPGAPGAK) and 299-320 (PGANGLPGAKGAAGLPGVAGAP). The segment covering 322–335 (LPGPRGIPGPPGPA) has biased composition (pro residues). 2 positions are modified to 4-hydroxyproline: P440 and P443. 2 stretches are compositionally biased toward low complexity: residues 601–610 (PAGPIGSRGP) and 674–683 (RGLPGAIGAP). A compositionally biased stretch (gly residues) spans 684–699 (GPAGGAGDRGEGGPAG). Over residues 721–736 (PSGFAGPPGAAGQPGA) the composition is skewed to low complexity. Residues 737 to 746 (KGERGPKGPK) show a composition bias toward basic and acidic residues. Composition is skewed to low complexity over residues 748–794 (ETGP…AGRV), 842–875 (AGEKGPSGEAGAAGPPGTPGPQGILGAPGILGLP), 898–931 (VSGPPGARGPSGPVGSPGPNGAPGEAGRDGNPGN), 955–965 (PSGALGAPGPH), and 986–995 (VGPAGAFGPR). Residues 1004–1015 (RGEKGEPGDKGH) are compositionally biased toward basic and acidic residues. Residues 1036–1049 (QHGDQGPPGNNGPA) show a composition bias toward low complexity. 2 stretches are compositionally biased toward pro residues: residues 1051–1060 (PRGPPGPSGP) and 1088–1102 (AGPPGPPGPPGPPGP). A propeptide spans 1118 to 1363 (ADQPSLRPKD…GLHIGPVCFK (246 aa)) (C-terminal propeptide). The Fibrillar collagen NC1 domain occupies 1128–1363 (YEVDATLKTL…GLHIGPVCFK (236 aa)). Cystine bridges form between C1158–C1190, C1198–C1361, and C1269–C1314. Ca(2+) contacts are provided by D1176, N1178, Q1179, C1181, and D1184. Residue N1264 is glycosylated (N-linked (GlcNAc...) asparagine).

This sequence belongs to the fibrillar collagen family. As to quaternary structure, trimers of one alpha 2(I) and two alpha 1(I) chains. Prolines at the third position of the tripeptide repeating unit (G-X-Y) are hydroxylated in some or all of the chains. Post-translationally, the N-terminus of the mature protein is blocked. Forms the fibrils of tendon, ligaments and bones. In bones the fibrils are mineralized with calcium hydroxyapatite.

Its subcellular location is the secreted. The protein resides in the extracellular space. It localises to the extracellular matrix. In terms of biological role, type I collagen is a member of group I collagen (fibrillar forming collagen). This is Collagen alpha-2(I) chain (COL1A2) from Gallus gallus (Chicken).